A 616-amino-acid chain; its full sequence is MPTAPALGALLLLLGALTPGHQEKLFHSRDHSDLQPSPQHQAELVTDLQSAQQFLSKYGWTEPVKWEGTSSKNAAELPRYGDADLMQEGASISRYGQEFPLEPTQAPAFVEALRKFQTLNGLPATGKLDDSTIAAMNKPRCGVPDNQIGKESAIVKSNSNNVTEKASGKSLNTTTNQNPENGTSTSKIRKKRFLQMLAAPVRYKDQANQGSTVRGAFSKKLLKWRLIGEGYSSQLSIDEQRYVFKTAFRMWSEVMPLDFEEDLTSPMSLIDVKLGFGRGRHLGCTRSFDGSGQEFAHAWFLGDIHFDDDEHFTAPSSDSGISLLKVAVHEIGHVLGLSHIYQTGSIMQPNYIPQEAGFELDWTDRKAIQMLYGTCEGSFDAVFDWIWKERNQYGELVLRYNTYFFRNAWYWLYENRKNRTRYGDPVTVSLGWHGIPAEGIDAFVHVWTWTEDATYFFKGTQYWRYDSENDQAYIKDAQGNQYPRLISEGFPKIPSPINTAFFDRRDQFIYFFKDAHVYAFDVKRNMVANHYPKRIIDVFPAVVRNNHPFGNIDAAYYAYTHNSIFLFKGKEYWKVVSDKDRQQNPKLPRNGLFLKKNISEQWTDICNVHSSMLKMR.

The N-terminal stretch at 1 to 22 is a signal peptide; the sequence is MPTAPALGALLLLLGALTPGHQ. The propeptide occupies 23 to 192; the sequence is EKLFHSRDHS…TSTSKIRKKR (170 aa). The Cysteine switch motif lies at 139-146; that stretch reads PRCGVPDN. Cys141 lines the Zn(2+) pocket. Residues 157–186 are disordered; that stretch reads SNSNNVTEKASGKSLNTTTNQNPENGTSTS. N-linked (GlcNAc...) asparagine glycosylation is found at Asn161, Asn172, and Asn181. Zn(2+) is bound at residue His329. Glu330 is an active-site residue. The Zn(2+) site is built by His333 and His339. Cys375 and Cys606 form a disulfide bridge. Hemopexin repeat units lie at residues 376 to 435, 437 to 493, 494 to 542, and 549 to 605; these read EGSF…WHGI, AEGI…FPKI, PSPI…FPAV, and FGNI…WTDI. An N-linked (GlcNAc...) asparagine glycan is attached at Asn418. A glycan (N-linked (GlcNAc...) asparagine) is linked at Asn597.

This sequence belongs to the peptidase M10A family. It depends on Zn(2+) as a cofactor. Ca(2+) is required as a cofactor. In terms of processing, the precursor is cleaved by a furin endopeptidase.

It localises to the secreted. Functionally, may play a role in gastrulation-related cell movement. Plays a specialized role in the generation of left-right asymmetry during embryogenesis. May act as a negative regulator of the NOTCH-signaling pathway. The protein is Matrix metalloproteinase-21 (MMP21) of Cynops pyrrhogaster (Japanese fire-bellied newt).